Consider the following 153-residue polypeptide: MVVKAVCVINGDAKGTVFFEQESSETPVKVSGEVCGLAKGLHGFHVHEFGDNTNGCMSSGPHFNPYGKEHGAPVDENRHLGDLGNIEATGDCPTKVSITDSKITLFGADSIIGRTVVVHADADDLGQGGHELSKSTGNAGARIGCGVIGIAKV.

3 residues coordinate Cu cation: H45, H47, and H62. A disulfide bridge connects residues C56 and C145. 4 residues coordinate Zn(2+): H62, H70, H79, and D82. A Cu cation-binding site is contributed by H119.

Belongs to the Cu-Zn superoxide dismutase family. As to quaternary structure, homodimer. It depends on Cu cation as a cofactor. Requires Zn(2+) as cofactor.

It is found in the cytoplasm. It carries out the reaction 2 superoxide + 2 H(+) = H2O2 + O2. Its function is as follows. Destroys radicals which are normally produced within the cells and which are toxic to biological systems. In Drosophila teissieri (Fruit fly), this protein is Superoxide dismutase [Cu-Zn].